The sequence spans 495 residues: Protein YhjJ (495 aa).

The first 24 residues, Met1–Ala24, serve as a signal peptide directing secretion.

This sequence belongs to the peptidase M16 family.

It is found in the periplasm. The sequence is that of Protein YhjJ (yhjJ) from Salmonella typhi.